We begin with the raw amino-acid sequence, 665 residues long: MVYSNNDVIQDFGSDLRYLKLLSKEFPTIASASTEIINLQAILNLPKGTEHFLSDIHGEYESFNHVLKNGSGNIKRKIIEVFGDLLSETEIKSLATLIYYPEQKLDLIHKKEENIEEWYKVTISRLVEVCRKAAFKYTRMKVRKALPKDFAYIIEELMHRGPKELDKEEYYNEIIETIIRIGRADEFIIEMSKLIQRLVIDRLHIVGDIFDRGPGPDIVMDTLLNYHSVDIQWGNHDVLWMGSAAGSEACIATLIRICATYSNLNTIEDGYGINLLPLATFALDFYKDDDCTAFKPKIKSDIIYTENDLKLIAKMHKAISIIQFKLEGEIINRRPHFSMEDRLLLNKINYEDGTVDIDGKIYKLKDSNFPTINPKNPYKLTIEEKELMEKLKSSFLNSEKLQRHVRFLFSNGSMYLKFNSNLMYHGGIPMNEDGSFKKVTIDSSGISYSGKAYFDRLEILVREAYFRKNNPIAKQHGMDITWYLWTGPDSPLFGKDKMTTFERYFINDKETHVEKKDPYFKLEDNEKMCRIIFEEFGLNPDVSHIINGHVPVKLKEGESPIRANGKLLVIDGGFSRTYQGTTGIAGYTLIYNSYGLLLVSHDPFESTQKAIEEEKDIHSTTMVLEKEVERKRVRDTDDGEKLKFQVKDLEMLLDAYRSGLIKEQR.

This sequence belongs to the FBPase class 3 family. Mn(2+) is required as a cofactor.

The catalysed reaction is beta-D-fructose 1,6-bisphosphate + H2O = beta-D-fructose 6-phosphate + phosphate. The protein operates within carbohydrate biosynthesis; gluconeogenesis. The protein is Fructose-1,6-bisphosphatase class 3 of Alkaliphilus metalliredigens (strain QYMF).